The following is a 199-amino-acid chain: Probable NADH dehydrogenase [ubiquinone] iron-sulfur protein 7, mitochondrial (199 aa).

Cys74, Cys75, Cys139, and Cys169 together coordinate [4Fe-4S] cluster.

The protein belongs to the complex I 20 kDa subunit family. As to quaternary structure, complex I is composed of 45 different subunits This is a component of the iron-sulfur (IP) fragment of the enzyme. It depends on [4Fe-4S] cluster as a cofactor.

Its subcellular location is the mitochondrion. It carries out the reaction a ubiquinone + NADH + 5 H(+)(in) = a ubiquinol + NAD(+) + 4 H(+)(out). Its function is as follows. Core subunit of the mitochondrial membrane respiratory chain NADH dehydrogenase (Complex I) that is believed to belong to the minimal assembly required for catalysis. Complex I functions in the transfer of electrons from NADH to the respiratory chain. The immediate electron acceptor for the enzyme is believed to be ubiquinone. In Caenorhabditis elegans, this protein is Probable NADH dehydrogenase [ubiquinone] iron-sulfur protein 7, mitochondrial (nduf-7).